A 478-amino-acid polypeptide reads, in one-letter code: Chromosomal replication initiator protein DnaA (478 aa).

The interval 1–71 (MNLTHIWKTT…RNALTRVVGY (71 aa)) is domain I, interacts with DnaA modulators. The segment at 71 to 136 (YPVQVQVLIA…LDLASAMRSG (66 aa)) is domain II. The interval 137 to 353 (MLNPRYTFAS…GSLNRVAAYA (217 aa)) is domain III, AAA+ region. The ATP site is built by Gly181, Gly183, Lys184, and Thr185. Residues 354–478 (ELNRLPITID…RERIQMMRGL (125 aa)) are domain IV, binds dsDNA.

Belongs to the DnaA family. In terms of assembly, oligomerizes as a right-handed, spiral filament on DNA at oriC.

The protein localises to the cytoplasm. In terms of biological role, plays an essential role in the initiation and regulation of chromosomal replication. ATP-DnaA binds to the origin of replication (oriC) to initiate formation of the DNA replication initiation complex once per cell cycle. Binds the DnaA box (a 9 base pair repeat at the origin) and separates the double-stranded (ds)DNA. Forms a right-handed helical filament on oriC DNA; dsDNA binds to the exterior of the filament while single-stranded (ss)DNA is stabiized in the filament's interior. The ATP-DnaA-oriC complex binds and stabilizes one strand of the AT-rich DNA unwinding element (DUE), permitting loading of DNA polymerase. After initiation quickly degrades to an ADP-DnaA complex that is not apt for DNA replication. Binds acidic phospholipids. The protein is Chromosomal replication initiator protein DnaA of Chloroflexus aggregans (strain MD-66 / DSM 9485).